Reading from the N-terminus, the 240-residue chain is UDP-2,3-diacylglucosamine hydrolase (240 aa).

Residues aspartate 8, histidine 10, aspartate 41, asparagine 79, and histidine 114 each contribute to the Mn(2+) site. 79-80 is a substrate binding site; it reads NR. Substrate is bound by residues aspartate 122, serine 160, asparagine 164, lysine 167, and histidine 195. Histidine 195 and histidine 197 together coordinate Mn(2+).

It belongs to the LpxH family. Mn(2+) serves as cofactor.

It is found in the cell inner membrane. It carries out the reaction UDP-2-N,3-O-bis[(3R)-3-hydroxytetradecanoyl]-alpha-D-glucosamine + H2O = 2-N,3-O-bis[(3R)-3-hydroxytetradecanoyl]-alpha-D-glucosaminyl 1-phosphate + UMP + 2 H(+). The protein operates within glycolipid biosynthesis; lipid IV(A) biosynthesis; lipid IV(A) from (3R)-3-hydroxytetradecanoyl-[acyl-carrier-protein] and UDP-N-acetyl-alpha-D-glucosamine: step 4/6. Functionally, hydrolyzes the pyrophosphate bond of UDP-2,3-diacylglucosamine to yield 2,3-diacylglucosamine 1-phosphate (lipid X) and UMP by catalyzing the attack of water at the alpha-P atom. Involved in the biosynthesis of lipid A, a phosphorylated glycolipid that anchors the lipopolysaccharide to the outer membrane of the cell. The chain is UDP-2,3-diacylglucosamine hydrolase from Photorhabdus laumondii subsp. laumondii (strain DSM 15139 / CIP 105565 / TT01) (Photorhabdus luminescens subsp. laumondii).